Reading from the N-terminus, the 265-residue chain is Short chain dehydrogenase mdpC (265 aa).

NADP(+) contacts are provided by I25, N98, and R131. Active-site proton donor residues include S147 and S148. NADP(+) contacts are provided by Y162, K166, and T197. The Proton acceptor role is filled by Y162. K166 (lowers pKa of active site Tyr) is an active-site residue.

The protein belongs to the short-chain dehydrogenases/reductases (SDR) family.

The catalysed reaction is 3,8,9,10-tetrahydroxy-6-methyl-1,4-dihydroanthracen-1-one + NADPH + H(+) = (3R)-3,8,9,10-tetrahydroxy-6-methyl-1,2,3,4-tetrahydroanthracen-1-one + NADP(+). It participates in secondary metabolite biosynthesis. Its function is as follows. Short chain dehydrogenase; part of the gene cluster that mediates the biosynthesis of monodictyphenone, a prenyl xanthone derivative. The pathway begins with the synthesis of atrochrysone thioester by the polyketide synthase (PKS) mdpG. The atrochrysone carboxyl ACP thioesterase mdpF then breaks the thioester bond and releases the atrochrysone carboxylic acid from mdpG. The atrochrysone carboxylic acid is then converted to atrochrysone which is further transformed into emodin anthrone. The next step is performed by the anthrone oxygenase mdpH that catalyzes the oxidation of emodinanthrone to emodin. Emodin is further modified to yield monodictyphenone via several steps involving mdpB, mdpC mdpJ, mdpK and mdpL. The short chain dehydrogenase mdpC converts the tautomers of emodin hydroquinone into the 3-hydroxy-3,4-dihydroan-thracen-1(2H)-one derivative. These enzymes with xptA, xptB and xptC are also proposed to be involved in the synthesis of shamixanthone from emodin. Especially, direct reduction of emodin by the short chain dehydrogenase mdpC followed by dehydration catalyzed by the scytalone dehydratase-like protein mdpB gives loss of oxygen and formation of chrysophanol intermediate in two simple steps. This is Short chain dehydrogenase mdpC from Emericella nidulans (strain FGSC A4 / ATCC 38163 / CBS 112.46 / NRRL 194 / M139) (Aspergillus nidulans).